We begin with the raw amino-acid sequence, 250 residues long: Mycofactocin precursor peptide peptidase (250 aa).

Positions 38, 40, 49, 127, and 166 each coordinate a divalent metal cation.

This sequence belongs to the creatininase superfamily. As to quaternary structure, homooctamer. It depends on Fe(2+) as a cofactor. Requires Zn(2+) as cofactor.

The catalysed reaction is [mycofactocin precursor peptide]-C-terminal glycyl-N-{5-[(4-hydroxyphenyl)methyl]-4,4-dimethyl-2-oxopyrrolidin-3-yl}acetamide + H2O = [mycofactocin precursor peptide]-C-terminal glycine + 3-amino-5-[(4-hydroxyphenyl)methyl]-4,4-dimethyl-2-pyrrolidin-2-one. Peptidase involved in the biosynthesis of the enzyme cofactor mycofactocin (MFT). Catalyzes cleavage of the MftC-modified MftA peptide to liberate its final two residues, which consist of a cross-linked valine-decarboxylated tyrosine dipeptide (named 3-amino-5-[(4-hydroxyphenyl)methyl]-4,4-dimethyl-2-pyrrolidin-2-one or ADHP). This chain is Mycofactocin precursor peptide peptidase, found in Mycobacterium ulcerans (strain Agy99).